Here is a 341-residue protein sequence, read N- to C-terminus: Holliday junction branch migration complex subunit RuvB (341 aa).

The interval 1-182 is large ATPase domain (RuvB-L); that stretch reads MTSSDPTLRP…FGIPTRLQFY (182 aa). ATP is bound by residues leucine 21, arginine 22, glycine 63, lysine 66, threonine 67, threonine 68, 129–131, arginine 172, tyrosine 182, and arginine 219; that span reads EDF. Position 67 (threonine 67) interacts with Mg(2+). The segment at 183 to 253 is small ATPAse domain (RuvB-S); sequence TEDELDLIVA…IADRALTRLG (71 aa). The interval 256–341 is head domain (RuvB-H); sequence HLGLDLGDRR…KGPGQSDLFG (86 aa). Positions 292, 311, and 316 each coordinate DNA.

It belongs to the RuvB family. As to quaternary structure, homohexamer. Forms an RuvA(8)-RuvB(12)-Holliday junction (HJ) complex. HJ DNA is sandwiched between 2 RuvA tetramers; dsDNA enters through RuvA and exits via RuvB. An RuvB hexamer assembles on each DNA strand where it exits the tetramer. Each RuvB hexamer is contacted by two RuvA subunits (via domain III) on 2 adjacent RuvB subunits; this complex drives branch migration. In the full resolvosome a probable DNA-RuvA(4)-RuvB(12)-RuvC(2) complex forms which resolves the HJ.

The protein resides in the cytoplasm. The enzyme catalyses ATP + H2O = ADP + phosphate + H(+). Functionally, the RuvA-RuvB-RuvC complex processes Holliday junction (HJ) DNA during genetic recombination and DNA repair, while the RuvA-RuvB complex plays an important role in the rescue of blocked DNA replication forks via replication fork reversal (RFR). RuvA specifically binds to HJ cruciform DNA, conferring on it an open structure. The RuvB hexamer acts as an ATP-dependent pump, pulling dsDNA into and through the RuvAB complex. RuvB forms 2 homohexamers on either side of HJ DNA bound by 1 or 2 RuvA tetramers; 4 subunits per hexamer contact DNA at a time. Coordinated motions by a converter formed by DNA-disengaged RuvB subunits stimulates ATP hydrolysis and nucleotide exchange. Immobilization of the converter enables RuvB to convert the ATP-contained energy into a lever motion, pulling 2 nucleotides of DNA out of the RuvA tetramer per ATP hydrolyzed, thus driving DNA branch migration. The RuvB motors rotate together with the DNA substrate, which together with the progressing nucleotide cycle form the mechanistic basis for DNA recombination by continuous HJ branch migration. Branch migration allows RuvC to scan DNA until it finds its consensus sequence, where it cleaves and resolves cruciform DNA. The chain is Holliday junction branch migration complex subunit RuvB from Cereibacter sphaeroides (strain ATCC 17029 / ATH 2.4.9) (Rhodobacter sphaeroides).